Here is a 176-residue protein sequence, read N- to C-terminus: Warthog protein 5 (176 aa).

The N-terminal stretch at 1–21 is a signal peptide; the sequence is MCSMWLMASWLMAFVAGSTLA. Asparagine 70 carries N-linked (GlcNAc...) asparagine glycosylation.

In terms of tissue distribution, expressed in seam cells, excretory cell, reproductive system, pharynx, pharyngeal-intestinal valve cells, neurons and neuronal support cells.

It is found in the secreted. Its function is as follows. Intercellular signal essential for a variety of patterning events during development. This Caenorhabditis elegans protein is Warthog protein 5 (wrt-5).